Reading from the N-terminus, the 260-residue chain is Hydroxyacylglutathione hydrolase (260 aa).

H61, H63, D65, H66, H119, D138, and H176 together coordinate Zn(2+).

The protein belongs to the metallo-beta-lactamase superfamily. Glyoxalase II family. Monomer. It depends on Zn(2+) as a cofactor.

It catalyses the reaction an S-(2-hydroxyacyl)glutathione + H2O = a 2-hydroxy carboxylate + glutathione + H(+). The protein operates within secondary metabolite metabolism; methylglyoxal degradation; (R)-lactate from methylglyoxal: step 2/2. Thiolesterase that catalyzes the hydrolysis of S-D-lactoyl-glutathione to form glutathione and D-lactic acid. The protein is Hydroxyacylglutathione hydrolase of Brucella anthropi (strain ATCC 49188 / DSM 6882 / CCUG 24695 / JCM 21032 / LMG 3331 / NBRC 15819 / NCTC 12168 / Alc 37) (Ochrobactrum anthropi).